The primary structure comprises 576 residues: Lysine--tRNA ligase, mitochondrial (576 aa).

The transit peptide at 1-30 (MNVLLKRRSLTFAPRWLWCKCRSSRSRPYS) directs the protein to the mitochondrion.

The protein belongs to the class-II aminoacyl-tRNA synthetase family.

It is found in the mitochondrion matrix. It catalyses the reaction tRNA(Lys) + L-lysine + ATP = L-lysyl-tRNA(Lys) + AMP + diphosphate. Catalyzes the attachment of lysine to tRNA(Lys) in the mitochondrion. This chain is Lysine--tRNA ligase, mitochondrial (MSK1), found in Saccharomyces cerevisiae (strain ATCC 204508 / S288c) (Baker's yeast).